A 226-amino-acid polypeptide reads, in one-letter code: Protein AF-9 homolog (226 aa).

The 162-residue stretch at 8-169 folds into the YEATS domain; it reads RIKTLSVSRP…EEFFKILMSR (162 aa). A coiled-coil region spans residues 187 to 224; sequence QLEQEEIDRIEIGIEKVDKEIDELKQKLENLVKQEAIN.

Component of the SWR1 chromatin-remodeling complex composed of at least ACT1, ARP4, RVB1, RVB2, ARP6, YAF9, VPS71, VPS72, SWC3, SWC4, SWC5, SWC7 and SWR1, and perhaps BDF1. Component of the NuA4 histone acetyltransferase complex composed of at least ACT1, ARP4, YAF9, VID21, SWC4, EAF3, EAF5, EAF6, EAF7, EPL1, ESA1, TRA1 and YNG2. Interacts with SWC4.

The protein resides in the cytoplasm. It is found in the nucleus. Functionally, component of the SWR1 complex which mediates the ATP-dependent exchange of histone H2A for the H2A variant HZT1 leading to transcriptional regulation of selected genes by chromatin remodeling. Component of the NuA4 histone acetyltransferase complex which is involved in transcriptional activation of selected genes principally by acetylation of nucleosomal histones H4 and H2A. The NuA4 complex is also involved in DNA repair. Yaf9 may also be required for viability in conditions in which the structural integrity of the spindle is compromised. This chain is Protein AF-9 homolog (YAF9), found in Saccharomyces cerevisiae (strain ATCC 204508 / S288c) (Baker's yeast).